We begin with the raw amino-acid sequence, 101 residues long: Replication restart protein PriB (101 aa).

The region spanning 1-101 is the SSB domain; the sequence is MATNHLVLSG…LHAENVELKT (101 aa).

It belongs to the PriB family. In terms of assembly, homodimer. Interacts with PriA and DnaT. Component of the replication restart primosome. Primosome assembly occurs via a 'hand-off' mechanism. PriA binds to replication forks, subsequently PriB then DnaT bind; DnaT then displaces ssDNA to generate the helicase loading substrate.

Functionally, involved in the restart of stalled replication forks, which reloads the replicative helicase on sites other than the origin of replication; the PriA-PriB pathway is the major replication restart pathway. During primosome assembly it facilitates complex formation between PriA and DnaT on DNA; stabilizes PriA on DNA. Stimulates the DNA unwinding activity of PriA helicase. In Shewanella woodyi (strain ATCC 51908 / MS32), this protein is Replication restart protein PriB.